Consider the following 171-residue polypeptide: Adenine phosphoribosyltransferase (171 aa).

It belongs to the purine/pyrimidine phosphoribosyltransferase family. As to quaternary structure, homodimer.

It localises to the cytoplasm. The enzyme catalyses AMP + diphosphate = 5-phospho-alpha-D-ribose 1-diphosphate + adenine. The protein operates within purine metabolism; AMP biosynthesis via salvage pathway; AMP from adenine: step 1/1. Its function is as follows. Catalyzes a salvage reaction resulting in the formation of AMP, that is energically less costly than de novo synthesis. The chain is Adenine phosphoribosyltransferase from Geotalea daltonii (strain DSM 22248 / JCM 15807 / FRC-32) (Geobacter daltonii).